We begin with the raw amino-acid sequence, 190 residues long: UPF0200 protein MTH_434 (190 aa).

An ATP-binding site is contributed by 10 to 17 (GMPGAGKG).

It belongs to the UPF0200 family.

This chain is UPF0200 protein MTH_434, found in Methanothermobacter thermautotrophicus (strain ATCC 29096 / DSM 1053 / JCM 10044 / NBRC 100330 / Delta H) (Methanobacterium thermoautotrophicum).